A 1138-amino-acid chain; its full sequence is Protein RECOGNITION OF PERONOSPORA PARASITICA 7 (1138 aa).

In terms of domain architecture, NB-ARC spans 166-422; it reads EENVKKLVGY…CNYVLSLSFE (257 aa). 189 to 196 contributes to the ATP binding site; it reads GMGGLGKT. 19 LRR repeats span residues 544-565, 566-581, 582-606, 607-631, 655-680, 681-705, 707-726, 727-752, 754-774, 775-797, 798-825, 847-871, 873-893, 894-918, 940-963, 1028-1050, 1055-1078, 1079-1103, and 1115-1138; these read QYPT…SLVV, VTLG…FTRL, ELLR…IGKL, IHLR…NLKL, MQEL…NLVK, LETL…RLRT, TIEL…IGGL, KYLE…VFDF, HLKR…QHFP, SHLT…ILEK, LLQL…GFPQ, MPLL…HLPS, LTAI…LERL, VHLK…GFPQ, MPRL…GFPQ, LEKL…RMVC, FPQL…QGSM, PLLH…RFIY, and KKRL…EFDD.

The protein belongs to the disease resistance NB-LRR family.

Its function is as follows. Disease resistance protein required for incompatible interactions with avirulent strains of Hyaloperonospora arabidopsidis (downy mildew), isolate Hpa-Hiks1 in cv. Columbia. The polypeptide is Protein RECOGNITION OF PERONOSPORA PARASITICA 7 (Arabidopsis thaliana (Mouse-ear cress)).